The primary structure comprises 161 residues: Anaerobic nitrite reductase Hb2 (161 aa).

The Globin domain occupies 8-157; that stretch reads GFSEEQEALV…LVDAIKSEMK (150 aa). The short motif at 41-45 is the Homodimerization element; the sequence is EIAPS. The heme b site is built by Ser-51, Lys-65, His-69, Lys-99, Thr-103, and His-104. Positions 111–123 match the Homodimerization motif; it reads NEHFEVTKFALLE.

Belongs to the plant globin family. As to quaternary structure, homodimer. It depends on heme b as a cofactor. In terms of tissue distribution, predominantly expressed in roots, cotyledons, stems and nodules (confined to some cells associated with the nitrogen-fixing Bradyrhizobium symbiont), and, to a lower extent, in flowers, young leaves, pods and seeds.

It is found in the cytoplasm. Its subcellular location is the nucleus. The catalysed reaction is Fe(III)-heme b-[protein] + nitric oxide + H2O = Fe(II)-heme b-[protein] + nitrite + 2 H(+). Its function is as follows. Phytoglobin that reduces nitrite to nitric oxide (NO) under anoxic conditions (e.g. during flooding or in waterlogged soil) and upon root nodulation. Required for general plant development and during nodulation, especially for the onset of symbiosis. Monitors nitric oxide (NO) levels during early phase of the nitrogen-fixing symbiosis and buffers oxygen in functioning nodules. May not function as an oxygen storage or transport protein. Has an unusually high affinity for O(2) through a hexacoordinate heme iron because of a very low dissociation constant. Involved in water stress tolerance. The sequence is that of Anaerobic nitrite reductase Hb2 from Glycine max (Soybean).